The chain runs to 272 residues: MQYQHPSSSALGLSVPLFAPTPLQHPTPFYIDDILGRNSASNGTPALPTPTLPSPNSSFTSLVATYRTPIYEPTPIHPAFTHPGAALAASYGASTYASPLYPFSRPVSDYTHALIRHDSLGKPLLWSPFIQRPLHKRKGGQVRFSNDQTIELEKKFETQKYLSPPERKRLAKMLQLSERQVKTWFQNRRAKWRRLKQENPQGNKKDETESLENICEESQERCLSAEQKSRESSLDDPTSSPTSQGNLDSEVSDDSDQEVDIEGDKGYYNCAH.

Residues 137 to 196 constitute a DNA-binding region (homeobox); the sequence is RKGGQVRFSNDQTIELEKKFETQKYLSPPERKRLAKMLQLSERQVKTWFQNRRAKWRRLK. The interval 222–272 is disordered; that stretch reads CLSAEQKSRESSLDDPTSSPTSQGNLDSEVSDDSDQEVDIEGDKGYYNCAH. Acidic residues predominate over residues 250-261; sequence EVSDDSDQEVDI.

As to expression, first expressed in the dorsal endomesoderm of the gastrula stage embryo. The dorsal endomesoderm contributes to forming the embryonic liver, and expression continues in the liver throughout development. Also expressed in precursors of the developing thyroid gland, and beginning at the tailbud stage, expressed in the ventral region of the head. Also transiently expressed in the endothelial layer of developing vascular tissues of the embryo, beginning at the tailbud stages.

The protein resides in the nucleus. Functionally, recognizes the DNA sequence 5'-ATTAA-3'. Transcriptional repressor. Regulates the differentiation of both endothelial and blood cells. Probably plays a role in the proliferation of vascular endothelial cells during blood vessel development. Establishes anterior identity at two levels; acts early to enhance canonical wnt-signaling by repressing expression of tle4, and acts later to inhibit nodal-signaling by directly targeting nodal/nr1 and nodal2/nr2. May play a role in liver development. Induces heart development. The polypeptide is Hematopoietically-expressed homeobox protein hhex (Xenopus laevis (African clawed frog)).